Here is an 85-residue protein sequence, read N- to C-terminus: Probable Sec-independent protein translocase protein TatE (85 aa).

A helical membrane pass occupies residues 1–21 (MEGLSITKLLVVGILIVLLFG). Residues 64–85 (KTVAETKAASDSQAAASVERKD) form a disordered region.

It belongs to the TatA/E family. TatE subfamily.

The protein resides in the cell inner membrane. Its function is as follows. Part of the twin-arginine translocation (Tat) system that transports large folded proteins containing a characteristic twin-arginine motif in their signal peptide across membranes. TatE shares overlapping functions with TatA. This chain is Probable Sec-independent protein translocase protein TatE, found in Yersinia pestis.